A 293-amino-acid chain; its full sequence is NAD kinase (293 aa).

D74 (proton acceptor) is an active-site residue. Residues 74–75, R79, 148–149, R176, D178, 189–194, and Q248 each bind NAD(+); these read DG, NE, and TAYALS.

It belongs to the NAD kinase family. A divalent metal cation serves as cofactor.

It is found in the cytoplasm. It carries out the reaction NAD(+) + ATP = ADP + NADP(+) + H(+). Functionally, involved in the regulation of the intracellular balance of NAD and NADP, and is a key enzyme in the biosynthesis of NADP. Catalyzes specifically the phosphorylation on 2'-hydroxyl of the adenosine moiety of NAD to yield NADP. This is NAD kinase from Blochmanniella floridana.